We begin with the raw amino-acid sequence, 155 residues long: Protein Smg homolog (155 aa).

Belongs to the Smg family.

The sequence is that of Protein Smg homolog from Azoarcus sp. (strain BH72).